The primary structure comprises 261 residues: U11/U12 small nuclear ribonucleoprotein 31 kDa protein (261 aa).

The disordered stretch occupies residues 18–51; it reads YYRYSSVAAPPPSNPKHQPSSSAKSSAPGGGSGG. The RRM domain occupies 57-135; the sequence is STLYVSNLDF…RKLTVSIAAD (79 aa). The CCHC-type zinc finger occupies 153–169; it reads RCYECGDEGHLSYECPK. The disordered stretch occupies residues 165–261; sequence YECPKNQLGP…YFSDESDDED (97 aa). Basic and acidic residues predominate over residues 226–235; sequence AGERLRKREA.

As to quaternary structure, component of the U11/U12 snRNPs that are part of the U12-type spliceosome. As to expression, ubiquitous. Abundantly expressed in the shoot apical neristem.

It localises to the nucleus. RNA chaperone required for proper U12 intron splicing and for normal growth and development of plants. Mainly responsible for meristem activity. Plays a role in regulating cell division. The chain is U11/U12 small nuclear ribonucleoprotein 31 kDa protein (SNRNP31) from Arabidopsis thaliana (Mouse-ear cress).